The sequence spans 216 residues: Molybdenum cofactor guanylyltransferase (216 aa).

Residues 16–18, Lys28, Asn57, Asp73, and Asp108 each bind GTP; that span reads LAG. A Mg(2+)-binding site is contributed by Asp108.

The protein belongs to the MobA family. In terms of assembly, monomer. Mg(2+) serves as cofactor.

It is found in the cytoplasm. It catalyses the reaction Mo-molybdopterin + GTP + H(+) = Mo-molybdopterin guanine dinucleotide + diphosphate. Transfers a GMP moiety from GTP to Mo-molybdopterin (Mo-MPT) cofactor (Moco or molybdenum cofactor) to form Mo-molybdopterin guanine dinucleotide (Mo-MGD) cofactor. The chain is Molybdenum cofactor guanylyltransferase from Rhizobium rhizogenes (strain K84 / ATCC BAA-868) (Agrobacterium radiobacter).